The primary structure comprises 479 residues: MAISCAVGMEMQEPKMNGTLSTGAAAGYRQEREGFLPTTHGPAPGRKPVQFLDFEGKTSFGMSVFNLSNAIMGSGILGLAYAMAHTGVIFFLALLLCIALLSSYSIHLLLTCASVVGIRAYEQLGQRAFGPAGKVVVAIIICLHNVGAMSSYLFIIKSELPLVIGTFLHMDPEGDWFLKGNLLIILVSLLIILPLALMKHLGYLGYTSSLSLTCMLFFLISVIYKKFQLGCVVSHNDTVVESEPAPLQAFNSSCEAKLFTVDSQMSYTVPIMAFAFVCHPEVLPIYTELCCPTQRRMQAVANMSIGAMFIMYGLTATFGYLTFYSTVKAEMLEMYTQEDLLILCVRLAVLLAVTLTVPVVLFPIRRALQQLLFPSKAFSWPRHVAIALILLILVNILVICVPTIRDIFGFIGSTSAPSLIFILPSVFYLRIVPADMEPLFSWPKIQALCFGVLGVLFMAISLGFMFANWATGQSRMSGH.

At 1–58 (MAISCAVGMEMQEPKMNGTLSTGAAAGYRQEREGFLPTTHGPAPGRKPVQFLDFEGKT) the chain is on the cytoplasmic side. A helical transmembrane segment spans residues 59–81 (SFGMSVFNLSNAIMGSGILGLAY). Topologically, residues 82-97 (AMAHTGVIFFLALLLC) are extracellular. A helical transmembrane segment spans residues 98 to 118 (IALLSSYSIHLLLTCASVVGI). Over 119 to 135 (RAYEQLGQRAFGPAGKV) the chain is Cytoplasmic. The helical transmembrane segment at 136–156 (VVAIIICLHNVGAMSSYLFII) threads the bilayer. Residues 157–176 (KSELPLVIGTFLHMDPEGDW) lie on the Extracellular side of the membrane. Residues 177–197 (FLKGNLLIILVSLLIILPLAL) form a helical membrane-spanning segment. At 198 to 202 (MKHLG) the chain is on the cytoplasmic side. A helical membrane pass occupies residues 203–223 (YLGYTSSLSLTCMLFFLISVI). The Extracellular portion of the chain corresponds to 224–264 (YKKFQLGCVVSHNDTVVESEPAPLQAFNSSCEAKLFTVDSQ). Cysteine 231 and cysteine 254 form a disulfide bridge. N-linked (GlcNAc...) asparagine glycosylation occurs at asparagine 236. A helical transmembrane segment spans residues 265–285 (MSYTVPIMAFAFVCHPEVLPI). Over 286 to 302 (YTELCCPTQRRMQAVAN) the chain is Cytoplasmic. A helical membrane pass occupies residues 303-323 (MSIGAMFIMYGLTATFGYLTF). Topologically, residues 324–341 (YSTVKAEMLEMYTQEDLL) are extracellular. The chain crosses the membrane as a helical span at residues 342-362 (ILCVRLAVLLAVTLTVPVVLF). Residues 363 to 383 (PIRRALQQLLFPSKAFSWPRH) lie on the Cytoplasmic side of the membrane. The chain crosses the membrane as a helical span at residues 384–404 (VAIALILLILVNILVICVPTI). At 405-406 (RD) the chain is on the extracellular side. A helical transmembrane segment spans residues 407–427 (IFGFIGSTSAPSLIFILPSVF). Residues 428-446 (YLRIVPADMEPLFSWPKIQ) are Cytoplasmic-facing. The chain crosses the membrane as a helical span at residues 447-467 (ALCFGVLGVLFMAISLGFMFA). The Extracellular segment spans residues 468–479 (NWATGQSRMSGH).

Belongs to the amino acid/polyamine transporter 2 family. In terms of tissue distribution, highly expressed in neocortex, hippocampus, striatum and spinal cord by astrocytes (at protein level). Expressed in brain, lung, stomach, kidney, spleen and testis. Expressed in the cerebral cortex between the second and third postnatal week, where expressed exclusively in glial cells from postnatal day 14 to adulthood (at protein level). Expressed in the cerebellum at post natal day 12 (P12). Expressed in liver. Expressed inside the cell body of the astrocytes.

The protein resides in the cell membrane. The enzyme catalyses L-serine(out) + Na(+)(out) + H(+)(in) = L-serine(in) + Na(+)(in) + H(+)(out). It catalyses the reaction L-alanine(out) + Na(+)(out) + H(+)(in) = L-alanine(in) + Na(+)(in) + H(+)(out). The catalysed reaction is glycine(out) + Na(+)(out) + H(+)(in) = glycine(in) + Na(+)(in) + H(+)(out). It carries out the reaction L-glutamine(out) + Na(+)(out) + H(+)(in) = L-glutamine(in) + Na(+)(in) + H(+)(out). The enzyme catalyses L-asparagine(out) + Na(+)(out) + H(+)(in) = L-asparagine(in) + Na(+)(in) + H(+)(out). It catalyses the reaction L-histidine(out) + Na(+)(out) + H(+)(in) = L-histidine(in) + Na(+)(in) + H(+)(out). The catalysed reaction is L-cysteine(out) + Na(+)(out) + H(+)(in) = L-cysteine(in) + Na(+)(in) + H(+)(out). With respect to regulation, not inhibited by lithium. Partial allosteric regulation on ions sodium binding. Its function is as follows. Symporter that cotransports neutral amino acids and sodium ions, coupled to an H(+) antiporter activity. Releases L-glutamine and glycine from astroglial cells and may participate in the glutamate/GABA-glutamine cycle and the NMDA receptors activation. In addition contributes significantly to L-glutamine uptake in retina, namely in ganglion and Mueller cells and, therefore participates in the retinal glutamate-glutamine cycle. The transport activity is pH sensitive, Li(+) tolerant, bidirectional and associated with large uncoupled fluxes of protons. The transport is electroneutral coupled to the cotransport of 1 Na(+) and the antiport of 1 H(+). May have particular importance for modulation of net hepatic glutamine flux. The chain is Sodium-coupled neutral amino acid transporter 5 from Rattus norvegicus (Rat).